The following is a 166-amino-acid chain: NADH-quinone oxidoreductase subunit I (166 aa).

2 4Fe-4S ferredoxin-type domains span residues 57–87 (LRRYPNGEERCIACKLCEAVCPALAITIESE) and 97–126 (TRYDIDMFKCINCGLCEESCPVDSIVVTPI). [4Fe-4S] cluster is bound by residues Cys-67, Cys-70, Cys-73, Cys-77, Cys-106, Cys-109, Cys-112, and Cys-116.

This sequence belongs to the complex I 23 kDa subunit family. NDH-1 is composed of 14 different subunits. Subunits NuoA, H, J, K, L, M, N constitute the membrane sector of the complex. It depends on [4Fe-4S] cluster as a cofactor.

Its subcellular location is the cell inner membrane. The catalysed reaction is a quinone + NADH + 5 H(+)(in) = a quinol + NAD(+) + 4 H(+)(out). Functionally, NDH-1 shuttles electrons from NADH, via FMN and iron-sulfur (Fe-S) centers, to quinones in the respiratory chain. The immediate electron acceptor for the enzyme in this species is believed to be ubiquinone. Couples the redox reaction to proton translocation (for every two electrons transferred, four hydrogen ions are translocated across the cytoplasmic membrane), and thus conserves the redox energy in a proton gradient. The polypeptide is NADH-quinone oxidoreductase subunit I (Legionella pneumophila (strain Lens)).